The following is a 349-amino-acid chain: Heparin sulfate O-sulfotransferase (349 aa).

At 1-17 the chain is on the cytoplasmic side; the sequence is MFRKLLKMWILLRPTHW. A helical; Signal-anchor for type II membrane protein membrane pass occupies residues 18-38; the sequence is LILIALCAVTCAGYWLLWSEI. Over 39 to 349 the chain is Lumenal; sequence RLEHAFKPLS…KFMYEKIRPK (311 aa). 2 N-linked (GlcNAc...) asparagine glycosylation sites follow: Asn-107 and Asn-126. Active-site residues include His-139 and His-141. Disulfide bonds link Cys-200-Cys-208 and Cys-221-Cys-227. A glycan (N-linked (GlcNAc...) asparagine) is linked at Asn-282.

This sequence belongs to the sulfotransferase 3 family. As to quaternary structure, homotrimer.

It is found in the golgi apparatus membrane. Functionally, catalyzes the transfer of sulfate to the C2-position of selected hexuronic acid residues within the maturing heparan sulfate (HS). The chain is Heparin sulfate O-sulfotransferase from Drosophila melanogaster (Fruit fly).